Reading from the N-terminus, the 99-residue chain is Aspartyl/glutamyl-tRNA(Asn/Gln) amidotransferase subunit C (99 aa).

Belongs to the GatC family. In terms of assembly, heterotrimer of A, B and C subunits.

The catalysed reaction is L-glutamyl-tRNA(Gln) + L-glutamine + ATP + H2O = L-glutaminyl-tRNA(Gln) + L-glutamate + ADP + phosphate + H(+). It catalyses the reaction L-aspartyl-tRNA(Asn) + L-glutamine + ATP + H2O = L-asparaginyl-tRNA(Asn) + L-glutamate + ADP + phosphate + 2 H(+). Functionally, allows the formation of correctly charged Asn-tRNA(Asn) or Gln-tRNA(Gln) through the transamidation of misacylated Asp-tRNA(Asn) or Glu-tRNA(Gln) in organisms which lack either or both of asparaginyl-tRNA or glutaminyl-tRNA synthetases. The reaction takes place in the presence of glutamine and ATP through an activated phospho-Asp-tRNA(Asn) or phospho-Glu-tRNA(Gln). In Corynebacterium glutamicum (strain R), this protein is Aspartyl/glutamyl-tRNA(Asn/Gln) amidotransferase subunit C.